A 546-amino-acid chain; its full sequence is Probable acyl-activating enzyme 21 (546 aa).

Belongs to the ATP-dependent AMP-binding enzyme family.

May act as an acid--thiol ligase that activates carboxylic acids by forming acyl-CoAs. This Arabidopsis thaliana (Mouse-ear cress) protein is Probable acyl-activating enzyme 21 (AEE21).